Consider the following 300-residue polypeptide: Ribosomal protein L11 methyltransferase (300 aa).

Residues T152, G173, D195, and N234 each contribute to the S-adenosyl-L-methionine site.

This sequence belongs to the methyltransferase superfamily. PrmA family.

Its subcellular location is the cytoplasm. The enzyme catalyses L-lysyl-[protein] + 3 S-adenosyl-L-methionine = N(6),N(6),N(6)-trimethyl-L-lysyl-[protein] + 3 S-adenosyl-L-homocysteine + 3 H(+). In terms of biological role, methylates ribosomal protein L11. In Burkholderia ambifaria (strain MC40-6), this protein is Ribosomal protein L11 methyltransferase.